The chain runs to 1107 residues: MLSRQRIPRILASRTSLAHSIRSFTSTTSSIRPVAAAGQHAVTRPRHERPTNLSSFSTYTALGKKNDKGFFDNSIEPLSEEERKANVEHAEAEAKEAESKQAKSKSSTSDAPPPAPEDGKAGAAGGSSAGSGSGADGGSGDGGKRGRKPGDKALAKPVVPEIYPQVMAIPIAKRPLFPGFYKAITIKDPNVAAAITEMIKRGQPYVGAFLFKDENADDDVIRNRDDVYDVGVFAQITSAFPMNNQNGEGASLTAILYPHRRIKLSELIPPGSPEAASIDGAKEGAAPEPVPEPIPKVTDESEQKGDVVASFEESAVTPRPEPSQKPYEPTSFLKKYPVSLVNVENLTEEPYDPKSQVIRAVTNEIVNVFKEVASMNSLFRDQISTFSMSQSTGNVMAEPAKLADFAAAVSAGEPAELQEVLSSLNVEERMHKALLVLKKEHVNAQLQSKITKDVEQKITKRQREYWLMEQMKGIRRELGIESDGKDKLVEKFKELADKLAMPEAVRKVFDDELNKLAHLEPAASEFNVTRNYLDWLTNIPWGQSSAENFDILNAVKVLDEDHYGLKDVKDRILEFIAVGKLRGTVEGKILCFVGPPGVGKTSIGKSIARALGRQYYRFSVGGLTDVAEIKGHRRTYVGALPGRVIQALKKCKTENPLILIDEIDKIGRGYQGDPSSALLELLDPEQNGSFLDHYLDVPVDLSKVLFVCTANLTDTIPRPLLDRMEVIRLSGYVADEKMAIAEKYLAPQAQEMAGLKGVDVQLTKDAIEELNKSYCRESGVRNLKKKIEQVYRKSALKIVQDLGEQALPESEALTEEGKAAQEETEKKKSEEAASGETSSPKAATEASEKETTEKPRVAMKIPEGVHVVINKDNLKDYVGPPIFTSDRLYDVTPPGVTMGLAWTSMGGAAMYVESILQSALTSKSAPSLEITGNLKTVMKESSAIAYSYAKAVMAKDFPKNRFFDKAKIHVHVPEGAVQKDGPSAGITMTTSLLSLALDTPIDPQIAMTGELTLTGKVLRIGGLREKTVAARRAGCKMVVFPEDNMSDWLELPENVKEGIEGRPVRWYSEVFDLIFPKLDREKANKSRIIEDDKSEKEESKKKNDDDE.

The N-terminal 31 residues, 1-31, are a transit peptide targeting the mitochondrion; it reads MLSRQRIPRILASRTSLAHSIRSFTSTTSSI. Disordered regions lie at residues 32–152 and 273–329; these read RPVA…PGDK and PEAA…PYEP. Positions 51 to 60 are enriched in polar residues; it reads TNLSSFSTYT. Over residues 80 to 101 the composition is skewed to basic and acidic residues; that stretch reads EEERKANVEHAEAEAKEAESKQ. A compositionally biased stretch (gly residues) spans 122–141; sequence GAAGGSSAGSGSGADGGSGD. Residues 142–152 show a composition bias toward basic and acidic residues; it reads GGKRGRKPGDK. Residues 166–441 enclose the Lon N-terminal domain; sequence VMAIPIAKRP…KALLVLKKEH (276 aa). 594-601 lines the ATP pocket; that stretch reads GPPGVGKT. Residues 808 to 858 are disordered; the sequence is PESEALTEEGKAAQEETEKKKSEEAASGETSSPKAATEASEKETTEKPRVA. Basic and acidic residues predominate over residues 815 to 831; it reads EEGKAAQEETEKKKSEE. The segment covering 832–845 has biased composition (low complexity); it reads AASGETSSPKAATE. Over residues 846 to 856 the composition is skewed to basic and acidic residues; that stretch reads ASEKETTEKPR. The Lon proteolytic domain maps to 891-1077; it reads VTPPGVTMGL…SEVFDLIFPK (187 aa). Catalysis depends on residues serine 983 and lysine 1026. The interval 1085–1107 is disordered; that stretch reads KSRIIEDDKSEKEESKKKNDDDE.

The protein belongs to the peptidase S16 family. In terms of assembly, homohexamer or homoheptamer. Organized in a ring with a central cavity.

It localises to the mitochondrion matrix. It catalyses the reaction Hydrolysis of proteins in presence of ATP.. In terms of biological role, ATP-dependent serine protease that mediates the selective degradation of misfolded, unassembled or oxidatively damaged polypeptides as well as certain short-lived regulatory proteins in the mitochondrial matrix. May also have a chaperone function in the assembly of inner membrane protein complexes. Participates in the regulation of mitochondrial gene expression and in the maintenance of the integrity of the mitochondrial genome. Binds to mitochondrial DNA in a site-specific manner. The sequence is that of Lon protease homolog, mitochondrial (pim1) from Neurospora crassa (strain ATCC 24698 / 74-OR23-1A / CBS 708.71 / DSM 1257 / FGSC 987).